The sequence spans 331 residues: Phenylalanine--tRNA ligase alpha subunit (331 aa).

Glutamate 252 serves as a coordination point for Mg(2+).

Belongs to the class-II aminoacyl-tRNA synthetase family. Phe-tRNA synthetase alpha subunit type 1 subfamily. In terms of assembly, tetramer of two alpha and two beta subunits. The cofactor is Mg(2+).

Its subcellular location is the cytoplasm. The catalysed reaction is tRNA(Phe) + L-phenylalanine + ATP = L-phenylalanyl-tRNA(Phe) + AMP + diphosphate + H(+). The chain is Phenylalanine--tRNA ligase alpha subunit from Hahella chejuensis (strain KCTC 2396).